The chain runs to 201 residues: 3-isopropylmalate dehydratase small subunit (201 aa).

It belongs to the LeuD family. LeuD type 1 subfamily. In terms of assembly, heterodimer of LeuC and LeuD.

It carries out the reaction (2R,3S)-3-isopropylmalate = (2S)-2-isopropylmalate. It participates in amino-acid biosynthesis; L-leucine biosynthesis; L-leucine from 3-methyl-2-oxobutanoate: step 2/4. Functionally, catalyzes the isomerization between 2-isopropylmalate and 3-isopropylmalate, via the formation of 2-isopropylmaleate. The chain is 3-isopropylmalate dehydratase small subunit from Sinorhizobium fredii (strain NBRC 101917 / NGR234).